The chain runs to 557 residues: Dihydroxy-acid dehydratase (557 aa).

Asp78 provides a ligand contact to Mg(2+). Cys119 is a [2Fe-2S] cluster binding site. Asp120 and Lys121 together coordinate Mg(2+). The residue at position 121 (Lys121) is an N6-carboxylysine. Cys192 is a [2Fe-2S] cluster binding site. Glu442 serves as a coordination point for Mg(2+). Ser468 serves as the catalytic Proton acceptor.

This sequence belongs to the IlvD/Edd family. As to quaternary structure, homodimer. The cofactor is [2Fe-2S] cluster. It depends on Mg(2+) as a cofactor.

The enzyme catalyses (2R)-2,3-dihydroxy-3-methylbutanoate = 3-methyl-2-oxobutanoate + H2O. The catalysed reaction is (2R,3R)-2,3-dihydroxy-3-methylpentanoate = (S)-3-methyl-2-oxopentanoate + H2O. The protein operates within amino-acid biosynthesis; L-isoleucine biosynthesis; L-isoleucine from 2-oxobutanoate: step 3/4. Its pathway is amino-acid biosynthesis; L-valine biosynthesis; L-valine from pyruvate: step 3/4. Functionally, functions in the biosynthesis of branched-chain amino acids. Catalyzes the dehydration of (2R,3R)-2,3-dihydroxy-3-methylpentanoate (2,3-dihydroxy-3-methylvalerate) into 2-oxo-3-methylpentanoate (2-oxo-3-methylvalerate) and of (2R)-2,3-dihydroxy-3-methylbutanoate (2,3-dihydroxyisovalerate) into 2-oxo-3-methylbutanoate (2-oxoisovalerate), the penultimate precursor to L-isoleucine and L-valine, respectively. This chain is Dihydroxy-acid dehydratase, found in Bacillus cereus (strain G9842).